Here is a 416-residue protein sequence, read N- to C-terminus: Probable endo-beta-1,4-glucanase celB (416 aa).

The N-terminal stretch at 1 to 17 is a signal peptide; that stretch reads MIWTLAPFVALLPLVTA. Residues Asn45, Asn104, Asn117, and Asn135 are each glycosylated (N-linked (GlcNAc...) asparagine). Glu214 acts as the Nucleophile in catalysis. Catalysis depends on Glu219, which acts as the Proton donor. N-linked (GlcNAc...) asparagine glycans are attached at residues Asn233, Asn278, Asn292, and Asn382.

This sequence belongs to the glycosyl hydrolase 7 (cellulase C) family.

It localises to the secreted. It catalyses the reaction Endohydrolysis of (1-&gt;4)-beta-D-glucosidic linkages in cellulose, lichenin and cereal beta-D-glucans.. Has endoglucanase activity on substrates containing beta-1,4 glycosidic bonds, like in carboxymethylcellulose (CMC), hydroxyethylcellulose (HEC) and beta-glucan. Involved in the degradation of complex natural cellulosic substrates. In Aspergillus flavus (strain ATCC 200026 / FGSC A1120 / IAM 13836 / NRRL 3357 / JCM 12722 / SRRC 167), this protein is Probable endo-beta-1,4-glucanase celB (celB).